A 520-amino-acid chain; its full sequence is GMP synthase [glutamine-hydrolyzing] (520 aa).

The region spanning 9-202 (KILILDFGSQ…VRKICGCSGQ (194 aa)) is the Glutamine amidotransferase type-1 domain. The active-site Nucleophile is Cys-86. Residues His-176 and Glu-178 contribute to the active site. Residues 203-395 (WTPGHIIDDA…LGLPHQMVWR (193 aa)) form the GMPS ATP-PPase domain. 230 to 236 (SGGVDSS) provides a ligand contact to ATP.

Homodimer.

The enzyme catalyses XMP + L-glutamine + ATP + H2O = GMP + L-glutamate + AMP + diphosphate + 2 H(+). The protein operates within purine metabolism; GMP biosynthesis; GMP from XMP (L-Gln route): step 1/1. Functionally, catalyzes the synthesis of GMP from XMP. In Geobacter metallireducens (strain ATCC 53774 / DSM 7210 / GS-15), this protein is GMP synthase [glutamine-hydrolyzing].